The primary structure comprises 183 residues: ATP synthase subunit delta (183 aa).

Belongs to the ATPase delta chain family. In terms of assembly, F-type ATPases have 2 components, F(1) - the catalytic core - and F(0) - the membrane proton channel. F(1) has five subunits: alpha(3), beta(3), gamma(1), delta(1), epsilon(1). F(0) has three main subunits: a(1), b(2) and c(10-14). The alpha and beta chains form an alternating ring which encloses part of the gamma chain. F(1) is attached to F(0) by a central stalk formed by the gamma and epsilon chains, while a peripheral stalk is formed by the delta and b chains.

The protein localises to the cell inner membrane. In terms of biological role, f(1)F(0) ATP synthase produces ATP from ADP in the presence of a proton or sodium gradient. F-type ATPases consist of two structural domains, F(1) containing the extramembraneous catalytic core and F(0) containing the membrane proton channel, linked together by a central stalk and a peripheral stalk. During catalysis, ATP synthesis in the catalytic domain of F(1) is coupled via a rotary mechanism of the central stalk subunits to proton translocation. Its function is as follows. This protein is part of the stalk that links CF(0) to CF(1). It either transmits conformational changes from CF(0) to CF(1) or is implicated in proton conduction. The protein is ATP synthase subunit delta of Oleidesulfovibrio alaskensis (strain ATCC BAA-1058 / DSM 17464 / G20) (Desulfovibrio alaskensis).